Consider the following 968-residue polypeptide: RNA polymerase-associated protein RapA (968 aa).

A Helicase ATP-binding domain is found at 163–332 (EVGRRYAPRV…FARLRLLDPD (170 aa)). 176-183 (DEVGLGKT) provides a ligand contact to ATP. A DEAH box motif is present at residues 278–281 (DEAH). The Helicase C-terminal domain occupies 491–641 (RVDWLIAFLK…AFELTCPSGH (151 aa)).

This sequence belongs to the SNF2/RAD54 helicase family. RapA subfamily. As to quaternary structure, interacts with the RNAP. Has a higher affinity for the core RNAP than for the holoenzyme. Its ATPase activity is stimulated by binding to RNAP.

Transcription regulator that activates transcription by stimulating RNA polymerase (RNAP) recycling in case of stress conditions such as supercoiled DNA or high salt concentrations. Probably acts by releasing the RNAP, when it is trapped or immobilized on tightly supercoiled DNA. Does not activate transcription on linear DNA. Probably not involved in DNA repair. This is RNA polymerase-associated protein RapA from Shewanella denitrificans (strain OS217 / ATCC BAA-1090 / DSM 15013).